Reading from the N-terminus, the 536-residue chain is 2,3-bisphosphoglycerate-independent phosphoglycerate mutase (536 aa).

The Mn(2+) site is built by Asp-19 and Ser-69. The active-site Phosphoserine intermediate is the Ser-69. Residues His-130, 160 to 161 (RD), Arg-192, Arg-198, 262 to 265 (RPDR), and Lys-335 each bind substrate. Positions 402, 406, 443, 444, and 461 each coordinate Mn(2+).

It belongs to the BPG-independent phosphoglycerate mutase family. As to quaternary structure, monomer. Mn(2+) is required as a cofactor.

The enzyme catalyses (2R)-2-phosphoglycerate = (2R)-3-phosphoglycerate. The protein operates within carbohydrate degradation; glycolysis; pyruvate from D-glyceraldehyde 3-phosphate: step 3/5. Catalyzes the interconversion of 2-phosphoglycerate and 3-phosphoglycerate. This Gloeobacter violaceus (strain ATCC 29082 / PCC 7421) protein is 2,3-bisphosphoglycerate-independent phosphoglycerate mutase.